The chain runs to 561 residues: Arginine--tRNA ligase (561 aa).

The 'HIGH' region motif lies at 135–145; the sequence is ANPTGLLHMGN.

This sequence belongs to the class-I aminoacyl-tRNA synthetase family. As to quaternary structure, monomer.

Its subcellular location is the cytoplasm. The catalysed reaction is tRNA(Arg) + L-arginine + ATP = L-arginyl-tRNA(Arg) + AMP + diphosphate. This chain is Arginine--tRNA ligase, found in Desulfitobacterium hafniense (strain DSM 10664 / DCB-2).